The primary structure comprises 270 residues: Phospholysine phosphohistidine inorganic pyrophosphate phosphatase (270 aa).

Mg(2+)-binding residues include aspartate 17 and serine 19. Substrate is bound by residues 17–19 (DIS), 54–55 (TN), and lysine 189. Aspartate 214 provides a ligand contact to Mg(2+).

The protein belongs to the HAD-like hydrolase superfamily. In terms of assembly, homodimer. Mg(2+) serves as cofactor.

Its subcellular location is the cytoplasm. The protein localises to the nucleus. It catalyses the reaction diphosphate + H2O = 2 phosphate + H(+). Functionally, phosphatase that hydrolyzes imidodiphosphate, 3-phosphohistidine and 6-phospholysine. Has broad substrate specificity and can also hydrolyze inorganic diphosphate, but with lower efficiency. The protein is Phospholysine phosphohistidine inorganic pyrophosphate phosphatase (Lhpp) of Mus musculus (Mouse).